The primary structure comprises 211 residues: MGKGDPKKPRGKMSSYAFFVQTCREEHKKKHSDASVNFSEFSNKCSERWKTMSAKEKGKFEDMAKADKTHYERQMKTYIPPKGETKKKFKDPNAPKRPPSAFFLFCSEYHPKIKGEHPGLSIGDVAKKLGEMWNNTAADDKQPGEKKAAKLKEKYEKDIAAYQAKGKPEAAKKGVVKAEKSKKKKEEEEDEEDEEDEEEEDEEDEEDDDDE.

7 positions are modified to N6-acetyllysine: Lys3, Lys7, Lys8, Lys12, Lys28, Lys29, and Lys30. A DNA-binding region (HMG box 1) is located at residues 9-79; that stretch reads PRGKMSSYAF…HYERQMKTYI (71 aa). Residues 71-96 form a disordered region; that stretch reads YERQMKTYIPPKGETKKKFKDPNAPK. Over residues 83–94 the composition is skewed to basic and acidic residues; it reads GETKKKFKDPNA. Positions 95–163 form a DNA-binding region, HMG box 2; that stretch reads PKRPPSAFFL…KYEKDIAAYQ (69 aa). 10 positions are modified to N6-acetyllysine: Lys127, Lys128, Lys172, Lys173, Lys177, Lys180, Lys182, Lys183, Lys184, and Lys185. Positions 161–211 are disordered; sequence AYQAKGKPEAAKKGVVKAEKSKKKKEEEEDEEDEEDEEEEDEEDEEDDDDE. The segment covering 166–179 has biased composition (basic and acidic residues); that stretch reads GKPEAAKKGVVKAE. Over residues 187–211 the composition is skewed to acidic residues; it reads EEEDEEDEEDEEEEDEEDEEDDDDE.

Belongs to the HMGB family.

The protein resides in the nucleus. Its subcellular location is the chromosome. In terms of biological role, binds preferentially single-stranded DNA and unwinds double-stranded DNA. This chain is High mobility group protein B1-like 1 (HMGB1P1), found in Homo sapiens (Human).